The following is a 265-amino-acid chain: Hydroxyethylthiazole kinase 2 (265 aa).

Substrate is bound at residue Met39. ATP contacts are provided by Lys115 and Thr168. Substrate is bound at residue Gly195.

The protein belongs to the Thz kinase family. The cofactor is Mg(2+).

The enzyme catalyses 5-(2-hydroxyethyl)-4-methylthiazole + ATP = 4-methyl-5-(2-phosphooxyethyl)-thiazole + ADP + H(+). Its pathway is cofactor biosynthesis; thiamine diphosphate biosynthesis; 4-methyl-5-(2-phosphoethyl)-thiazole from 5-(2-hydroxyethyl)-4-methylthiazole: step 1/1. Catalyzes the phosphorylation of the hydroxyl group of 4-methyl-5-beta-hydroxyethylthiazole (THZ). This chain is Hydroxyethylthiazole kinase 2, found in Clostridium botulinum (strain Kyoto / Type A2).